A 358-amino-acid polypeptide reads, in one-letter code: Peptide chain release factor 1 (358 aa).

N5-methylglutamine is present on Q235.

Belongs to the prokaryotic/mitochondrial release factor family. In terms of processing, methylated by PrmC. Methylation increases the termination efficiency of RF1.

The protein resides in the cytoplasm. Peptide chain release factor 1 directs the termination of translation in response to the peptide chain termination codons UAG and UAA. The protein is Peptide chain release factor 1 of Brachyspira hyodysenteriae (strain ATCC 49526 / WA1).